Consider the following 395-residue polypeptide: Pyridinium-3,5-bisthiocarboxylic acid mononucleotide nickel insertion protein (395 aa).

The protein belongs to the LarC family.

It catalyses the reaction Ni(II)-pyridinium-3,5-bisthiocarboxylate mononucleotide = pyridinium-3,5-bisthiocarboxylate mononucleotide + Ni(2+). Functionally, involved in the biosynthesis of a nickel-pincer cofactor ((SCS)Ni(II) pincer complex). Binds Ni(2+), and functions in nickel delivery to pyridinium-3,5-bisthiocarboxylic acid mononucleotide (P2TMN), to form the mature cofactor. Is thus probably required for the activation of nickel-pincer cofactor-dependent enzymes. The sequence is that of Pyridinium-3,5-bisthiocarboxylic acid mononucleotide nickel insertion protein from Staphylococcus epidermidis (strain ATCC 12228 / FDA PCI 1200).